The chain runs to 836 residues: Translation initiation factor IF-2 (836 aa).

Positions 1–17 (MLRLMRQKKLSIQRRTK) are enriched in basic residues. Disordered stretches follow at residues 1 to 43 (MLRL…RTVK) and 83 to 240 (AAKK…KGAA). Low complexity predominate over residues 18–27 (TTVSSTTTGG). Residues 83–153 (AAKKEADEKV…AAEEAKRYAE (71 aa)) show a composition bias toward basic and acidic residues. Residues 154–167 (ADDSDNESSSEDYS) are compositionally biased toward acidic residues. Basic residues predominate over residues 192 to 202 (RGKNKVAKAKK). Basic and acidic residues predominate over residues 203–229 (GGRDDENSKNSKNERESNRKNQKDAKF). Residues 335 to 505 (TRAPVVTIMG…LLQSEVLELT (171 aa)) form the tr-type G domain. The interval 344-351 (GHVDHGKT) is G1. 344-351 (GHVDHGKT) lines the GTP pocket. Positions 369–373 (GITQH) are G2. The segment at 391–394 (DTPG) is G3. GTP-binding positions include 391–395 (DTPGH) and 445–448 (NKID). The segment at 445–448 (NKID) is G4. The interval 481 to 483 (SAK) is G5.

The protein belongs to the TRAFAC class translation factor GTPase superfamily. Classic translation factor GTPase family. IF-2 subfamily.

The protein localises to the cytoplasm. Functionally, one of the essential components for the initiation of protein synthesis. Protects formylmethionyl-tRNA from spontaneous hydrolysis and promotes its binding to the 30S ribosomal subunits. Also involved in the hydrolysis of GTP during the formation of the 70S ribosomal complex. In Haemophilus influenzae (strain PittEE), this protein is Translation initiation factor IF-2.